The primary structure comprises 784 residues: MIRSQSYCFLGITITIYFFFCLLPLPNTFASPPTQSLCRHDQRDALLELQKEFPIPSVILQNPWNKGIDCCSWGGVTCDAILGEVISLKLYFLSTASTSLKSSSALFKLQHLTHLDLSNCNLQGEIPSSIENLSHLTHLDLSTNHLVGEVPASIGNLNQLEYIDLRGNHLRGNIPTSFANLTKLSLLDLHENNFTGGDIVLSNLTSLAILDLSSNHFKSFFSADLSGLHNLEQIFGNENSFVGLFPASLLKISSLDKIQLSQNQFEGPIDFGNTSSSSRLTMLDISHNNFIGRVPSSLSKLVNLELLDLSHNNFRGLSPRSISKLVNLTSLDISYNKLEGQVPYFIWKPSNLQSVDLSHNSFFDLGKSVEVVNGAKLVGLNLGSNSLQGPIPQWICNFRFVFFLDLSDNRFTGSIPQCLKNSTDFNTLNLRNNSLSGFLPELCMDSTMLRSLDVSYNNFVGKLPKSLMNCQDMEFLNVRGNKIKDTFPFWLGSRKSLMVLVLRSNAFYGPVYNSTTYLGFPRLSIIDISNNDFVGSLPQDYFANWTEMATVWDINRLNYARNTSSRTIQYGGLQTIQRSNYVGDNFNMHADSMDLAYKGVDTDFNRIFRGFKVIDFSGNRFSGHIPRSIGLLSELLHLNLSGNAFTGNIPPSLANITNLETLDLSRNNLSGEIPRSLGNLSFLSNINFSHNHLQGFVPRSTQFGTQNCSSFVGNPGLYGLDEICRESHHVPVPTSQQHDGSSSELEEPVLNWIAAAIAFGPGVFCGFVIGHIFTSYKHLWFIAR.

Residues 1–30 form the signal peptide; it reads MIRSQSYCFLGITITIYFFFCLLPLPNTFA. The Extracellular portion of the chain corresponds to 31–752; sequence SPPTQSLCRH…SELEEPVLNW (722 aa). LRR repeat units follow at residues 109-133, 134-157, 158-180, 182-204, and 205-227; these read LQHLTHLDLSNCNLQGEIPSSIENL, SHLTHLDLSTNHLVGEVPASIGNL, NQLEYIDLRGNHLRGNIPTSFAN, TKLSLLDLHENNFTGGDIVLSNL, and TSLAILDLSSNHFKSFFSADLSG. Asn-132 carries an N-linked (GlcNAc...) asparagine glycan. Asn-180, Asn-193, and Asn-203 each carry an N-linked (GlcNAc...) asparagine glycan. Residues 228–251 form an LRR 6; degenerate repeat; that stretch reads LHNLEQIFGNENSFVGLFPASLLK. LRR repeat units follow at residues 252–276, 278–301, 302–324, 326–349, 351–373, 374–400, 402–422, 423–446, 447–470, and 472–496; these read ISSLDKIQLSQNQFEGPIDFGNTSS, SRLTMLDISHNNFIGRVPSSLSKL, VNLELLDLSHNNFRGLSPRSISK, VNLTSLDISYNKLEGQVPYFIWKP, NLQSVDLSHNSFFDLGKSVEVVN, GAKLVGLNLGSNSLQGPIPQWICNFRF, FFLDLSDNRFTGSIPQCLKNS, TDFNTLNLRNNSLSGFLPELCMDS, TMLRSLDVSYNNFVGKLPKSLMNC, and DMEFLNVRGNKIKDTFPFWLGSRKS. A glycan (N-linked (GlcNAc...) asparagine) is linked at Asn-273. The N-linked (GlcNAc...) asparagine glycan is linked to Asn-327. 2 N-linked (GlcNAc...) asparagine glycosylation sites follow: Asn-421 and Asn-432. Residues 497-518 form an LRR 17; degenerate repeat; the sequence is LMVLVLRSNAFYGPVYNSTTYL. N-linked (GlcNAc...) asparagine glycans are attached at residues Asn-513, Asn-544, and Asn-562. The LRR 18 repeat unit spans residues 520–544; the sequence is FPRLSIIDISNNDFVGSLPQDYFAN. LRR repeat units follow at residues 608–632, 633–656, 657–680, and 682–705; these read FRGFKVIDFSGNRFSGHIPRSIGLL, SELLHLNLSGNAFTGNIPPSLANI, TNLETLDLSRNNLSGEIPRSLGNL, and FLSNINFSHNHLQGFVPRSTQFGT. 6 N-linked (GlcNAc...) asparagine glycosylation sites follow: Asn-639, Asn-655, Asn-668, Asn-679, Asn-687, and Asn-707. A helical membrane pass occupies residues 753–773; that stretch reads IAAAIAFGPGVFCGFVIGHIF. The Cytoplasmic portion of the chain corresponds to 774-784; it reads TSYKHLWFIAR.

The protein belongs to the RLP family.

The protein localises to the cell membrane. The protein is Receptor-like protein 38 of Arabidopsis thaliana (Mouse-ear cress).